The primary structure comprises 309 residues: Probable manganese-dependent inorganic pyrophosphatase (309 aa).

Positions 9, 13, 15, 75, 97, and 149 each coordinate Mn(2+).

This sequence belongs to the PPase class C family. The cofactor is Mn(2+).

It localises to the cytoplasm. It carries out the reaction diphosphate + H2O = 2 phosphate + H(+). The polypeptide is Probable manganese-dependent inorganic pyrophosphatase (Exiguobacterium sp. (strain ATCC BAA-1283 / AT1b)).